A 734-amino-acid polypeptide reads, in one-letter code: Photosystem I P700 chlorophyll a apoprotein A2 (734 aa).

Transmembrane regions (helical) follow at residues 46–69, 135–158, 175–199, 273–291, 330–353, 369–395, 417–439, and 517–535; these read IFAS…FHVA, LYTG…LHLQ, LNHH…HVAI, IAHH…GHMY, LHFQ…QHMY, AALY…IFFI, AIIS…LYVH, and FLVH…SIPV. Positions 559 and 568 each coordinate [4Fe-4S] cluster. 2 helical membrane passes run 575–596 and 643–665; these read AFYL…YWHW and LSVW…MFLI. Residues histidine 654, methionine 662, and tyrosine 670 each contribute to the chlorophyll a site. Tryptophan 671 is a binding site for phylloquinone. The chain crosses the membrane as a helical span at residues 707–727; it reads LVGLAHFSVGYIFTYAAFLIA.

It belongs to the PsaA/PsaB family. The PsaA/B heterodimer binds the P700 chlorophyll special pair and subsequent electron acceptors. PSI consists of a core antenna complex that captures photons, and an electron transfer chain that converts photonic excitation into a charge separation. The eukaryotic PSI reaction center is composed of at least 11 subunits. P700 is a chlorophyll a/chlorophyll a' dimer, A0 is one or more chlorophyll a, A1 is one or both phylloquinones and FX is a shared 4Fe-4S iron-sulfur center. is required as a cofactor.

It localises to the plastid. The protein localises to the chloroplast thylakoid membrane. The catalysed reaction is reduced [plastocyanin] + hnu + oxidized [2Fe-2S]-[ferredoxin] = oxidized [plastocyanin] + reduced [2Fe-2S]-[ferredoxin]. Its function is as follows. PsaA and PsaB bind P700, the primary electron donor of photosystem I (PSI), as well as the electron acceptors A0, A1 and FX. PSI is a plastocyanin-ferredoxin oxidoreductase, converting photonic excitation into a charge separation, which transfers an electron from the donor P700 chlorophyll pair to the spectroscopically characterized acceptors A0, A1, FX, FA and FB in turn. Oxidized P700 is reduced on the lumenal side of the thylakoid membrane by plastocyanin. This is Photosystem I P700 chlorophyll a apoprotein A2 from Angiopteris evecta (Mule's foot fern).